Reading from the N-terminus, the 95-residue chain is Small ribosomal subunit protein bS6 (95 aa).

Belongs to the bacterial ribosomal protein bS6 family.

Functionally, binds together with bS18 to 16S ribosomal RNA. The chain is Small ribosomal subunit protein bS6 from Acholeplasma laidlawii (strain PG-8A).